The sequence spans 530 residues: Putative ABC transporter ATP-binding protein SSO2030 (530 aa).

2 ABC transporter domains span residues 6-243 (IRDL…LGLE) and 282-516 (ALYA…EPPL). Residues 38-45 (GRSGSGKS) and 314-321 (GKNGSGKT) each bind ATP.

It belongs to the ABC transporter superfamily.

It is found in the cell membrane. Its function is as follows. Probably part of an ABC transporter complex. Responsible for energy coupling to the transport system. This is Putative ABC transporter ATP-binding protein SSO2030 from Saccharolobus solfataricus (strain ATCC 35092 / DSM 1617 / JCM 11322 / P2) (Sulfolobus solfataricus).